Consider the following 140-residue polypeptide: Nucleoside diphosphate kinase (140 aa).

6 residues coordinate ATP: lysine 11, phenylalanine 59, arginine 87, threonine 93, arginine 104, and asparagine 114. Residue histidine 117 is the Pros-phosphohistidine intermediate of the active site.

It belongs to the NDK family. Homotetramer. Mg(2+) is required as a cofactor.

Its subcellular location is the cytoplasm. It carries out the reaction a 2'-deoxyribonucleoside 5'-diphosphate + ATP = a 2'-deoxyribonucleoside 5'-triphosphate + ADP. The enzyme catalyses a ribonucleoside 5'-diphosphate + ATP = a ribonucleoside 5'-triphosphate + ADP. Its function is as follows. Major role in the synthesis of nucleoside triphosphates other than ATP. The ATP gamma phosphate is transferred to the NDP beta phosphate via a ping-pong mechanism, using a phosphorylated active-site intermediate. The polypeptide is Nucleoside diphosphate kinase (Rhizobium etli (strain ATCC 51251 / DSM 11541 / JCM 21823 / NBRC 15573 / CFN 42)).